The chain runs to 360 residues: Phospho-N-acetylmuramoyl-pentapeptide-transferase (360 aa).

A run of 10 helical transmembrane segments spans residues 24–44, 69–89, 92–112, 133–153, 158–178, 199–219, 239–259, 263–283, 288–308, and 337–357; these read RAVMAALTALAFSLMFGPWTI, GTPTMGGSLILTAITVSTLLW, WANPYIWILLGVLLATGALGF, MVWQSSVAIIAGLALFYLAAN, ILIVPFFKQIALPLGVVGFLV, GLATFPVVLVAAGLAIFAYAS, VVIFCTAMCGACLGFLWFNAY, VFMGDVGALALGAALGTVAVI, FVLVIMGGLFVVEAVSVMLQV, and QVVVRFWIITIVLVLIGLSTL.

Belongs to the glycosyltransferase 4 family. MraY subfamily. It depends on Mg(2+) as a cofactor.

It is found in the cell inner membrane. The enzyme catalyses UDP-N-acetyl-alpha-D-muramoyl-L-alanyl-gamma-D-glutamyl-meso-2,6-diaminopimeloyl-D-alanyl-D-alanine + di-trans,octa-cis-undecaprenyl phosphate = di-trans,octa-cis-undecaprenyl diphospho-N-acetyl-alpha-D-muramoyl-L-alanyl-D-glutamyl-meso-2,6-diaminopimeloyl-D-alanyl-D-alanine + UMP. It participates in cell wall biogenesis; peptidoglycan biosynthesis. Catalyzes the initial step of the lipid cycle reactions in the biosynthesis of the cell wall peptidoglycan: transfers peptidoglycan precursor phospho-MurNAc-pentapeptide from UDP-MurNAc-pentapeptide onto the lipid carrier undecaprenyl phosphate, yielding undecaprenyl-pyrophosphoryl-MurNAc-pentapeptide, known as lipid I. This chain is Phospho-N-acetylmuramoyl-pentapeptide-transferase, found in Neisseria meningitidis serogroup A / serotype 4A (strain DSM 15465 / Z2491).